Here is a 403-residue protein sequence, read N- to C-terminus: Argininosuccinate synthase 1 (403 aa).

Residues 10 to 18 and alanine 37 each bind ATP; that span reads SYSGGLDTS. The L-citrulline site is built by tyrosine 88 and serine 93. Glycine 118 contacts ATP. Threonine 120, asparagine 124, and aspartate 125 together coordinate L-aspartate. Asparagine 124 provides a ligand contact to L-citrulline. 5 residues coordinate L-citrulline: arginine 128, serine 179, serine 188, glutamate 264, and tyrosine 276.

It belongs to the argininosuccinate synthase family. Type 1 subfamily. As to quaternary structure, homotetramer.

The protein localises to the cytoplasm. It catalyses the reaction L-citrulline + L-aspartate + ATP = 2-(N(omega)-L-arginino)succinate + AMP + diphosphate + H(+). The protein operates within amino-acid biosynthesis; L-arginine biosynthesis; L-arginine from L-ornithine and carbamoyl phosphate: step 2/3. The protein is Argininosuccinate synthase 1 of Rhizobium johnstonii (strain DSM 114642 / LMG 32736 / 3841) (Rhizobium leguminosarum bv. viciae).